The primary structure comprises 326 residues: Sucrose operon repressor (326 aa).

In terms of domain architecture, HTH lacI-type spans 1–57 (MKPKLNDVAKLAGVSATTVSRVINNHGYLSSQTKEKVFAAMRELHYQPNNMARSLQG). The H-T-H motif DNA-binding region spans 5–24 (LNDVAKLAGVSATTVSRVIN).

Functionally, negative regulator of scrB expression. The polypeptide is Sucrose operon repressor (scrR) (Pediococcus pentosaceus).